The primary structure comprises 782 residues: Isoamylase 3, chloroplastic (782 aa).

Residues 1-68 constitute a chloroplast transit peptide; that stretch reads MDSIGINRAP…EKVRRFDSVR (68 aa). The segment covering 68–81 has biased composition (polar residues); the sequence is RSTTARAQNGNAGR. Residues 68 to 88 form a disordered region; it reads RSTTARAQNGNAGRSMTEERG. Catalysis depends on Asp-445, which acts as the Nucleophile. The active-site Proton donor is the Glu-482.

Belongs to the glycosyl hydrolase 13 family. As to expression, expressed in leaves. Expressed at low levels in developing endosperm.

Its subcellular location is the plastid. It localises to the chloroplast. It is found in the amyloplast. The catalysed reaction is Hydrolysis of (1-&gt;6)-alpha-D-glucosidic branch linkages in glycogen, amylopectin and their beta-limit dextrins.. Starch-debranching enzyme that plays a role in the degradation of transitory starch during the night in leaf blades, facilitates the formation of spherical amyloplasts containing compound granules in the endosperm, and affects morphological characteristics of plastids. The protein is Isoamylase 3, chloroplastic of Oryza sativa subsp. japonica (Rice).